A 229-amino-acid chain; its full sequence is Large ribosomal subunit protein uL1 (229 aa).

This sequence belongs to the universal ribosomal protein uL1 family. In terms of assembly, part of the 50S ribosomal subunit.

Binds directly to 23S rRNA. The L1 stalk is quite mobile in the ribosome, and is involved in E site tRNA release. Functionally, protein L1 is also a translational repressor protein, it controls the translation of the L11 operon by binding to its mRNA. The sequence is that of Large ribosomal subunit protein uL1 from Streptococcus equi subsp. equi (strain 4047).